The sequence spans 272 residues: Cytochrome b-c1 complex subunit Rieske-2, mitochondrial (272 aa).

Residues 1 to 60 (MLRIAGRRASSLSRWPVRSVAPSSSAFISANHFSSDDDSSSPRSISPSLASVFLHHTRGF) constitute a mitochondrion transit peptide. At 61 to 109 (SSNSVSHAHDMGLVPDLPPTVAAIKNPTSKIVYDEHNHERYPPGDPSKR) the chain is on the mitochondrial matrix side. The helical transmembrane segment at 110-132 (AFAYFVLTGGRFVYASLVRLLIL) threads the bilayer. The Mitochondrial intermembrane segment spans residues 133 to 272 (KFVLSMSASK…FLEENKLLIG (140 aa)). Residues 182–270 (INLANSVDLG…YSFLEENKLL (89 aa)) form the Rieske domain. Residues Cys-215, His-217, Cys-234, and His-237 each coordinate [2Fe-2S] cluster. A disulfide bridge links Cys-220 with Cys-236.

It belongs to the Rieske iron-sulfur protein family. Component of the ubiquinol-cytochrome c oxidoreductase (cytochrome b-c1 complex, complex III, CIII), a multisubunit enzyme composed of 3 respiratory subunits cytochrome b, cytochrome c1 and Rieske protein, 2 core protein subunits, and several low-molecular weight protein subunits. The complex exists as an obligatory dimer and forms supercomplexes (SCs) in the inner mitochondrial membrane with cytochrome c oxidase (complex IV, CIV). The cofactor is [2Fe-2S] cluster. As to expression, high levels are seen in the flowers while a low level expression is seen in the roots, leaves and stems.

Its subcellular location is the mitochondrion inner membrane. It catalyses the reaction a quinol + 2 Fe(III)-[cytochrome c](out) = a quinone + 2 Fe(II)-[cytochrome c](out) + 2 H(+)(out). In terms of biological role, component of the ubiquinol-cytochrome c oxidoreductase, a multisubunit transmembrane complex that is part of the mitochondrial electron transport chain which drives oxidative phosphorylation. The respiratory chain contains 3 multisubunit complexes succinate dehydrogenase (complex II, CII), ubiquinol-cytochrome c oxidoreductase (cytochrome b-c1 complex, complex III, CIII) and cytochrome c oxidase (complex IV, CIV), that cooperate to transfer electrons derived from NADH and succinate to molecular oxygen, creating an electrochemical gradient over the inner membrane that drives transmembrane transport and the ATP synthase. The cytochrome b-c1 complex catalyzes electron transfer from ubiquinol to cytochrome c, linking this redox reaction to translocation of protons across the mitochondrial inner membrane, with protons being carried across the membrane as hydrogens on the quinol. In the process called Q cycle, 2 protons are consumed from the matrix, 4 protons are released into the intermembrane space and 2 electrons are passed to cytochrome c. The Rieske protein is a catalytic core subunit containing a [2Fe-2S] iron-sulfur cluster. It cycles between 2 conformational states during catalysis to transfer electrons from the quinol bound in the Q(0) site in cytochrome b to cytochrome c1. This chain is Cytochrome b-c1 complex subunit Rieske-2, mitochondrial, found in Nicotiana tabacum (Common tobacco).